Here is a 110-residue protein sequence, read N- to C-terminus: UPF0060 membrane protein Veis_0342 (110 aa).

4 helical membrane-spanning segments follow: residues 8-28 (VLFTITAVVEIVGCYLPWLVI), 33-53 (PLWLLLPAALSLALFAWLLTL), 63-83 (AAYGGIYIAVALAWLHWVDGV), and 90-110 (VAGATVAMVGMLIIMLQPASA).

This sequence belongs to the UPF0060 family.

It localises to the cell inner membrane. The protein is UPF0060 membrane protein Veis_0342 of Verminephrobacter eiseniae (strain EF01-2).